A 302-amino-acid polypeptide reads, in one-letter code: MWDGEKMAAAMVQMSCLYRGMLAVRNHGIRPLIPGLVPSHFRAFSMKKEPELEENPYYSKYEEKIRKLRSSKPQEYESRLEKRTELKTEPLGRSRQAEFVKYMEKELDKRGKDGDGGFTKDKTLGSILNLEMVQEKSGAEITELWMQYFSKKDTISAVIPSSTFDVIFGRAKSCPTFLYALPQNEGYEFFVGQWAGNELHFTSLINVQTMGENAPSQLILYHYTDLQKDKDIVLMTAEMDSKFVTVHQAQCLANQVQLFYGSQRLETFRLVETFNHKPEEFKHMAVIAELEQSGIGPAVTTK.

It belongs to the ATP11 family. Interacts with ATP5F1B; involved in the assembly of the F1 component of the mitochondrial ATP synthase (ATPase).

The protein localises to the mitochondrion inner membrane. Has a complex stabilizing activity in the assembly of the mitochondrial F1-F0 complex. This Danio rerio (Zebrafish) protein is ATP synthase mitochondrial F1 complex assembly factor 1 (atpaf1).